The sequence spans 325 residues: Adenine deaminase (325 aa).

Zn(2+)-binding residues include H8, H10, and H186. E189 (proton donor) is an active-site residue. Residue D267 coordinates Zn(2+). Substrate is bound at residue D268.

The protein belongs to the metallo-dependent hydrolases superfamily. Adenosine and AMP deaminases family. Adenine deaminase type 2 subfamily. It depends on Zn(2+) as a cofactor.

The enzyme catalyses adenine + H2O + H(+) = hypoxanthine + NH4(+). In terms of biological role, catalyzes the hydrolytic deamination of adenine to hypoxanthine. Plays an important role in the purine salvage pathway and in nitrogen catabolism. The sequence is that of Adenine deaminase from Chelativorans sp. (strain BNC1).